The primary structure comprises 154 residues: Protein X (154 aa).

The tract at residues 26-45 (RGRPVSGPLGSLSSSSPSAV) is disordered. Residues 31 to 43 (SGPLGSLSSSSPS) show a composition bias toward low complexity. A mitochondrial targeting sequence region spans residues 68-117 (PCALRFTSARRMETTVNAHQILPKILHKRTLGLSTMSTTDLEAYFKDCLF).

It belongs to the orthohepadnavirus protein X family. In terms of assembly, may form homodimer. May interact with host CEBPA, CFLAR, CREB1, DDB1, E4F1, HBXIP, HSPD1/HSP60, NFKBIA, POLR2E and SMAD4. Interacts with host SMC5-SMC6 complex and induces its degradation. Interacts with host TRPC4AP; leading to prevent ubiquitination of TRPC4AP. Interacts with host PLSCR1; this interaction promotes ubiquitination and degradation of HBx and impairs HBx-mediated cell proliferation. Post-translationally, a fraction may be phosphorylated in insect cells and HepG2 cells, a human hepatoblastoma cell line. Phosphorylated in vitro by host protein kinase C or mitogen-activated protein kinase. N-acetylated in insect cells.

It localises to the host cytoplasm. Its subcellular location is the host nucleus. It is found in the host mitochondrion. Multifunctional protein that plays a role in silencing host antiviral defenses and promoting viral transcription. Does not seem to be essential for HBV infection. May be directly involved in development of cirrhosis and liver cancer (hepatocellular carcinoma). Most of cytosolic activities involve modulation of cytosolic calcium. The effect on apoptosis is controversial depending on the cell types in which the studies have been conducted. May induce apoptosis by localizing in mitochondria and causing loss of mitochondrial membrane potential. May also modulate apoptosis by binding host CFLAR, a key regulator of the death-inducing signaling complex (DISC). Promotes viral transcription by using the host E3 ubiquitin ligase DDB1 to target the SMC5-SMC6 complex to proteasomal degradation. This host complex would otherwise bind to viral episomal DNA, and prevents its transcription. Moderately stimulates transcription of many different viral and cellular transcription elements. Promoters and enhancers stimulated by HBx contain DNA binding sites for NF-kappa-B, AP-1, AP-2, c-EBP, ATF/CREB, or the calcium-activated factor NF-AT. The chain is Protein X from Hepatitis B virus genotype D subtype ayw (isolate Japan/JYW796/1988) (HBV-D).